The chain runs to 599 residues: Elongation factor 4 (599 aa).

The tr-type G domain maps to 5–187 (DLIRNFSIVA…AIVTRLPPPK (183 aa)). GTP is bound by residues 17 to 22 (DHGKST) and 134 to 137 (NKID).

It belongs to the TRAFAC class translation factor GTPase superfamily. Classic translation factor GTPase family. LepA subfamily.

It is found in the cell inner membrane. The catalysed reaction is GTP + H2O = GDP + phosphate + H(+). In terms of biological role, required for accurate and efficient protein synthesis under certain stress conditions. May act as a fidelity factor of the translation reaction, by catalyzing a one-codon backward translocation of tRNAs on improperly translocated ribosomes. Back-translocation proceeds from a post-translocation (POST) complex to a pre-translocation (PRE) complex, thus giving elongation factor G a second chance to translocate the tRNAs correctly. Binds to ribosomes in a GTP-dependent manner. This is Elongation factor 4 from Cereibacter sphaeroides (strain ATCC 17025 / ATH 2.4.3) (Rhodobacter sphaeroides).